The sequence spans 196 residues: Protein GrpE (196 aa).

The tract at residues 1–39 (MSSKEQKTPEGQAPEEIIMDQHEEIEAVEPEASAEQVDP) is disordered.

This sequence belongs to the GrpE family. As to quaternary structure, homodimer.

It is found in the cytoplasm. Participates actively in the response to hyperosmotic and heat shock by preventing the aggregation of stress-denatured proteins, in association with DnaK and GrpE. It is the nucleotide exchange factor for DnaK and may function as a thermosensor. Unfolded proteins bind initially to DnaJ; upon interaction with the DnaJ-bound protein, DnaK hydrolyzes its bound ATP, resulting in the formation of a stable complex. GrpE releases ADP from DnaK; ATP binding to DnaK triggers the release of the substrate protein, thus completing the reaction cycle. Several rounds of ATP-dependent interactions between DnaJ, DnaK and GrpE are required for fully efficient folding. The chain is Protein GrpE from Escherichia coli O139:H28 (strain E24377A / ETEC).